Reading from the N-terminus, the 272-residue chain is Putative pyruvate, phosphate dikinase regulatory protein (272 aa).

154 to 161 (GVSRTSKS) contacts ADP.

It belongs to the pyruvate, phosphate/water dikinase regulatory protein family. PDRP subfamily.

It carries out the reaction N(tele)-phospho-L-histidyl/L-threonyl-[pyruvate, phosphate dikinase] + ADP = N(tele)-phospho-L-histidyl/O-phospho-L-threonyl-[pyruvate, phosphate dikinase] + AMP + H(+). It catalyses the reaction N(tele)-phospho-L-histidyl/O-phospho-L-threonyl-[pyruvate, phosphate dikinase] + phosphate + H(+) = N(tele)-phospho-L-histidyl/L-threonyl-[pyruvate, phosphate dikinase] + diphosphate. Its function is as follows. Bifunctional serine/threonine kinase and phosphorylase involved in the regulation of the pyruvate, phosphate dikinase (PPDK) by catalyzing its phosphorylation/dephosphorylation. The polypeptide is Putative pyruvate, phosphate dikinase regulatory protein (Wolbachia pipientis subsp. Culex pipiens (strain wPip)).